A 78-amino-acid chain; its full sequence is MSLEDDVKLIIVDQLGVDASEVNENSSFIEDLNADSLDLTELIMTLEEKFDFEISEQDAEKLRTVGDVITYIKTRQGE.

The 76-residue stretch at 1–76 (MSLEDDVKLI…DVITYIKTRQ (76 aa)) folds into the Carrier domain. O-(pantetheine 4'-phosphoryl)serine is present on serine 36.

The protein belongs to the acyl carrier protein (ACP) family. Post-translationally, 4'-phosphopantetheine is transferred from CoA to a specific serine of apo-ACP by AcpS. This modification is essential for activity because fatty acids are bound in thioester linkage to the sulfhydryl of the prosthetic group.

It is found in the cytoplasm. It participates in lipid metabolism; fatty acid biosynthesis. Its function is as follows. Carrier of the growing fatty acid chain in fatty acid biosynthesis. The sequence is that of Acyl carrier protein from Chlamydia felis (strain Fe/C-56) (Chlamydophila felis).